The chain runs to 205 residues: Golgi to ER traffic protein 1 (205 aa).

Residues 1–3 are Lumenal-facing; that stretch reads MDY. Residues 4-24 form a helical membrane-spanning segment; the sequence is WILLVLAFLVADKSWHLTGLL. The Cytoplasmic portion of the chain corresponds to 25 to 96; that stretch reads ATKLTSPERL…ATKARLAKLK (72 aa). The stretch at 32–96 forms a coiled coil; the sequence is ERLQQLIRER…ATKARLAKLK (65 aa). Residues 97-117 traverse the membrane as a helical segment; the sequence is LLVVTVPFTALKFYKGKLPVY. Residues 118 to 156 lie on the Lumenal side of the membrane; it reads ALPKGMFPRFIEGTLEHGWLYMALAPLNMKQFSEGASVA. The helical transmembrane segment at 157 to 173 threads the bilayer; sequence VSLGIWLFALLRVLGAI. The Cytoplasmic portion of the chain corresponds to 174–205; it reads EFVLETLREQNPQVATETAKVHARTAQAASAN.

This sequence belongs to the WRB/GET1 family. Component of the Golgi to ER traffic (GET) complex, which is composed of GET1, GET2 and GET3. Within the complex, GET1 and GET2 form a heterotetramer which is stabilized by phosphatidylinositol binding and which binds to the GET3 homodimer.

Its subcellular location is the endoplasmic reticulum membrane. The protein resides in the golgi apparatus membrane. Required for the post-translational delivery of tail-anchored (TA) proteins to the endoplasmic reticulum. Together with GET2, acts as a membrane receptor for soluble GET3, which recognizes and selectively binds the transmembrane domain of TA proteins in the cytosol. The GET complex cooperates with the HDEL receptor ERD2 to mediate the ATP-dependent retrieval of resident ER proteins that contain a C-terminal H-D-E-L retention signal from the Golgi to the ER. This Eremothecium gossypii (strain ATCC 10895 / CBS 109.51 / FGSC 9923 / NRRL Y-1056) (Yeast) protein is Golgi to ER traffic protein 1.